Reading from the N-terminus, the 286-residue chain is Energy-coupling factor transporter ATP-binding protein EcfA2 (286 aa).

In terms of domain architecture, ABC transporter spans 3–246 (IRFDNVSYTY…KEKLADWHIG (244 aa)). ATP is bound at residue 40-47 (GQTGSGKS).

Belongs to the ABC transporter superfamily. Energy-coupling factor EcfA family. Forms a stable energy-coupling factor (ECF) transporter complex composed of 2 membrane-embedded substrate-binding proteins (S component), 2 ATP-binding proteins (A component) and 2 transmembrane proteins (T component).

It is found in the cell membrane. In terms of biological role, ATP-binding (A) component of a common energy-coupling factor (ECF) ABC-transporter complex. Unlike classic ABC transporters this ECF transporter provides the energy necessary to transport a number of different substrates. In Staphylococcus aureus (strain MRSA252), this protein is Energy-coupling factor transporter ATP-binding protein EcfA2.